A 723-amino-acid polypeptide reads, in one-letter code: Protein Aster-A (723 aa).

Residues 1-18 are compositionally biased toward low complexity; sequence MFDTTPHSGRSSPSSSPS. The interval 1–63 is disordered; it reads MFDTTPHSGR…SGVSGTLSTQ (63 aa). The span at 28-38 shows a compositional bias: pro residues; the sequence is PSRPPSAPEPE. In terms of domain architecture, GRAM spans 93-160; sequence EDFRKLFSKL…KEVTCLKKEK (68 aa). A disordered region spans residues 257 to 337; it reads SPSGAADRSQ…DGPTSNLGPL (81 aa). Residues serine 265, serine 269, and serine 273 each carry the phosphoserine modification. Over residues 302-314 the composition is skewed to polar residues; that stretch reads DSQLDASSSQTVT. In terms of domain architecture, VASt spans 370 to 541; it reads SGRLLINSVF…ELAKAEKVSL (172 aa). Serine 418 bears the Phosphoserine mark. The tract at residues 562–601 is disordered; sequence LSWRGHRDGPQHPDPDPCTQTSMHTSGSLSSRFSEPSVDQ. The span at 566–576 shows a compositional bias: basic and acidic residues; that stretch reads GHRDGPQHPDP. Polar residues predominate over residues 579–595; the sequence is CTQTSMHTSGSLSSRFS. Residues 610-630 traverse the membrane as a helical segment; it reads ALVLISIVLIVLIALNALLFY.

It is found in the endoplasmic reticulum membrane. The protein resides in the cell membrane. It localises to the cytoplasmic vesicle. The protein localises to the autophagosome. Its function is as follows. Cholesterol transporter that mediates non-vesicular transport of cholesterol from the plasma membrane (PM) to the endoplasmic reticulum (ER). Contains unique domains for binding cholesterol and the PM, thereby serving as a molecular bridge for the transfer of cholesterol from the PM to the ER. Plays a crucial role in cholesterol homeostasis and has the unique ability to localize to the PM based on the level of membrane cholesterol. In lipid-poor conditions localizes to the ER membrane and in response to excess cholesterol in the PM is recruited to the endoplasmic reticulum-plasma membrane contact sites (EPCS) which is mediated by the GRAM domain. At the EPCS, the sterol-binding VASt/ASTER domain binds to the cholesterol in the PM and facilitates its transfer from the PM to ER. May play a role in tumor progression. Plays a role in autophagy regulation and is required for biogenesis of the autophagosome. This function in autophagy requires its cholesterol-transfer activity. This Rattus norvegicus (Rat) protein is Protein Aster-A.